Reading from the N-terminus, the 284-residue chain is MDFIRAIILGIIEGITEWLPISSTGHLIIADEFIRLNQSAAFKEMFDVVIQLGAILSVVVLYFHKLNPFNKLNPADKQKTPREIQLTWRLWLKVLIAALPAAIIGLPLNDWLDKHFYHFVPVAFMLIIYGVAFIVIERRWVPNHEFSVMDIDRLPYRAALYIDLFQVLSLLPGTSRSGATIVGALLIGVSREVAAEFTFFLGIPVMFGASFIKILHFFKNGNSLNFEQFGVLLVACLVAFGVSMVAIKFLTDYVKKHDFTFFGKYRIVLGIVLLIYAAFKAFLG.

A run of 8 helical transmembrane segments spans residues 7-27, 44-64, 90-110, 116-136, 167-187, 197-217, 229-249, and 259-279; these read IILGIIEGITEWLPISSTGHL, EMFDVVIQLGAILSVVVLYFH, LWLKVLIAALPAAIIGLPLND, FYHFVPVAFMLIIYGVAFIVI, VLSLLPGTSRSGATIVGALLI, FTFFLGIPVMFGASFIKILHF, FGVLLVACLVAFGVSMVAIKF, and FTFFGKYRIVLGIVLLIYAAF.

The protein belongs to the UppP family.

The protein resides in the cell membrane. The enzyme catalyses di-trans,octa-cis-undecaprenyl diphosphate + H2O = di-trans,octa-cis-undecaprenyl phosphate + phosphate + H(+). Functionally, catalyzes the dephosphorylation of undecaprenyl diphosphate (UPP). Confers resistance to bacitracin. The chain is Undecaprenyl-diphosphatase from Lactococcus lactis subsp. cremoris (strain MG1363).